Consider the following 977-residue polypeptide: Poly [ADP-ribose] polymerase 1 (977 aa).

2 consecutive PARP-type zinc fingers follow at residues 8–91 and 104–179; these read WKAE…GSAP and CTIE…KKDA. Cys20, Cys23, His52, Cys55, Cys116, Cys119, His141, and Cys144 together coordinate Zn(2+). Disordered regions lie at residues 177 to 199 and 218 to 237; these read KDAP…QNDI and DKGK…DLQE. The region spanning 227–365 is the PADR1 zinc-binding domain; that stretch reads DSNANSSDLQ…AKKPERVLPP (139 aa). The 35-residue stretch at 254–288 folds into the SAP domain; sequence KKHVSTAELRNMLEANGQDTSGPERHLLDRCADGM. Residues 291–335 are zinc ribbon; it reads GALGTCPVCSSFLYYHGGQYHCSGYVSEWSKCTYSTTEPVRSKKK. Zn(2+) contacts are provided by Cys296, Cys299, Cys312, and Cys322. The BRCT domain maps to 381–473; the sequence is SFLSEGLDKL…RVLPFDLYKV (93 aa). In terms of domain architecture, WGR spans 504–604; that stretch reads TGHILEDGKS…TNFQKQPGKF (101 aa). The 120-residue stretch at 626–745 folds into the PARP alpha-helical domain; sequence KSSLPPQLLE…DIEIASKLVG (120 aa). A PARP catalytic domain is found at 752–977; it reads ESLDDKYKKL…LLKVRFHHKR (226 aa).

This sequence belongs to the ARTD/PARP family.

It localises to the nucleus. It catalyses the reaction NAD(+) + (ADP-D-ribosyl)n-acceptor = nicotinamide + (ADP-D-ribosyl)n+1-acceptor + H(+).. The catalysed reaction is L-aspartyl-[protein] + NAD(+) = 4-O-(ADP-D-ribosyl)-L-aspartyl-[protein] + nicotinamide. It carries out the reaction L-glutamyl-[protein] + NAD(+) = 5-O-(ADP-D-ribosyl)-L-glutamyl-[protein] + nicotinamide. Involved in the base excision repair (BER) pathway, by catalyzing the poly(ADP-ribosyl)ation of a limited number of acceptor proteins involved in chromatin architecture and in DNA metabolism. This modification follows DNA damages and appears as an obligatory step in a detection/signaling pathway leading to the reparation of DNA strand breaks. The polypeptide is Poly [ADP-ribose] polymerase 1 (PARP1) (Oryza sativa subsp. japonica (Rice)).